The primary structure comprises 287 residues: Proteasome assembly chaperone 1 (287 aa).

The disordered stretch occupies residues 1–32; that stretch reads MATFFGEVQSVFSRAVDEDDEEEEGEEEEEDR. Positions 17–32 are enriched in acidic residues; sequence DEDDEEEEGEEEEEDR.

It belongs to the PSMG1 family. In terms of assembly, forms a heterodimer with psmg2. In terms of processing, degraded by the proteasome upon completion of 20S proteasome maturation.

The protein localises to the cytoplasm. It localises to the endoplasmic reticulum. Chaperone protein which promotes assembly of the 20S proteasome as part of a heterodimer with psmg2. The protein is Proteasome assembly chaperone 1 of Xenopus tropicalis (Western clawed frog).